Here is a 166-residue protein sequence, read N- to C-terminus: UPF0336 protein ML2425 (166 aa).

Residues 10–131 (LIGKHYRQLD…VIAEVRSEVT (122 aa)) form the MaoC-like domain.

Belongs to the UPF0336 family.

The polypeptide is UPF0336 protein ML2425 (Mycobacterium leprae (strain TN)).